Here is a 338-residue protein sequence, read N- to C-terminus: DNA-directed RNA polymerase subunit alpha (338 aa).

An alpha N-terminal domain (alpha-NTD) region spans residues 1-230 (MRKITTSAYM…QQMSVFKGIL (230 aa)). The alpha C-terminal domain (alpha-CTD) stretch occupies residues 247–338 (FSKLLSSVED…ELKSQMSAKE (92 aa)).

This sequence belongs to the RNA polymerase alpha chain family. In terms of assembly, homodimer. The RNAP catalytic core consists of 2 alpha, 1 beta, 1 beta' and 1 omega subunit. When a sigma factor is associated with the core the holoenzyme is formed, which can initiate transcription.

It carries out the reaction RNA(n) + a ribonucleoside 5'-triphosphate = RNA(n+1) + diphosphate. DNA-dependent RNA polymerase catalyzes the transcription of DNA into RNA using the four ribonucleoside triphosphates as substrates. This chain is DNA-directed RNA polymerase subunit alpha, found in Campylobacter concisus (strain 13826).